A 297-amino-acid polypeptide reads, in one-letter code: 4-hydroxy-tetrahydrodipicolinate synthase (297 aa).

Pyruvate is bound at residue T46. The active-site Proton donor/acceptor is the Y134. Catalysis depends on K163, which acts as the Schiff-base intermediate with substrate. I205 is a pyruvate binding site.

It belongs to the DapA family. As to quaternary structure, homotetramer; dimer of dimers.

It is found in the cytoplasm. It catalyses the reaction L-aspartate 4-semialdehyde + pyruvate = (2S,4S)-4-hydroxy-2,3,4,5-tetrahydrodipicolinate + H2O + H(+). The protein operates within amino-acid biosynthesis; L-lysine biosynthesis via DAP pathway; (S)-tetrahydrodipicolinate from L-aspartate: step 3/4. In terms of biological role, catalyzes the condensation of (S)-aspartate-beta-semialdehyde [(S)-ASA] and pyruvate to 4-hydroxy-tetrahydrodipicolinate (HTPA). The polypeptide is 4-hydroxy-tetrahydrodipicolinate synthase (Thermoanaerobacter pseudethanolicus (strain ATCC 33223 / 39E) (Clostridium thermohydrosulfuricum)).